Consider the following 251-residue polypeptide: Imidazole glycerol phosphate synthase subunit HisF (251 aa).

Active-site residues include Asp11 and Asp130.

This sequence belongs to the HisA/HisF family. As to quaternary structure, heterodimer of HisH and HisF.

The protein resides in the cytoplasm. It catalyses the reaction 5-[(5-phospho-1-deoxy-D-ribulos-1-ylimino)methylamino]-1-(5-phospho-beta-D-ribosyl)imidazole-4-carboxamide + L-glutamine = D-erythro-1-(imidazol-4-yl)glycerol 3-phosphate + 5-amino-1-(5-phospho-beta-D-ribosyl)imidazole-4-carboxamide + L-glutamate + H(+). It participates in amino-acid biosynthesis; L-histidine biosynthesis; L-histidine from 5-phospho-alpha-D-ribose 1-diphosphate: step 5/9. IGPS catalyzes the conversion of PRFAR and glutamine to IGP, AICAR and glutamate. The HisF subunit catalyzes the cyclization activity that produces IGP and AICAR from PRFAR using the ammonia provided by the HisH subunit. The protein is Imidazole glycerol phosphate synthase subunit HisF of Chlorobaculum parvum (strain DSM 263 / NCIMB 8327) (Chlorobium vibrioforme subsp. thiosulfatophilum).